The primary structure comprises 1390 residues: Hepatocyte growth factor receptor (1390 aa).

The signal sequence occupies residues 1 to 24 (MKAPAVLAPGILVLLFTLVQRSNG). At 25-932 (ECKEALAKSE…VIVQPDQNFT (908 aa)) the chain is on the extracellular side. The Sema domain maps to 27–515 (KEALAKSEMN…TGKKITKIPL (489 aa)). N-linked (GlcNAc...) asparagine glycosylation occurs at asparagine 45. Intrachain disulfides connect cysteine 95/cysteine 101, cysteine 98/cysteine 160, cysteine 133/cysteine 141, and cysteine 172/cysteine 175. Asparagine 106 is a glycosylation site (N-linked (GlcNAc...) asparagine). Asparagine 149 carries N-linked (GlcNAc...) asparagine glycosylation. Asparagine 202 carries an N-linked (GlcNAc...) asparagine glycan. Cystine bridges form between cysteine 298/cysteine 363 and cysteine 385/cysteine 397. Asparagine 399 and asparagine 405 each carry an N-linked (GlcNAc...) asparagine glycan. 4 disulfide bridges follow: cysteine 520–cysteine 538, cysteine 526–cysteine 561, cysteine 529–cysteine 545, and cysteine 541–cysteine 551. IPT/TIG domains follow at residues 563-655 (PAIY…FSYV), 657-739 (PVIT…FSYR), and 742-836 (PIVY…LIYV). Threonine 582 carries an O-linked (Man) threonine glycan. Residues asparagine 607 and asparagine 635 are each glycosylated (N-linked (GlcNAc...) asparagine). O-linked (Man) threonine glycosylation is found at threonine 676 and threonine 761. Asparagine 785, asparagine 879, and asparagine 930 each carry an N-linked (GlcNAc...) asparagine glycan. The chain crosses the membrane as a helical span at residues 933 to 955 (GLIAGVVSISIALLLLLGFFLWL). Residues 956–1390 (KKRKQIKDLG…TRPASFWETS (435 aa)) are Cytoplasmic-facing. The residue at position 966 (serine 966) is a Phosphoserine. Threonine 977 bears the Phosphothreonine mark. 3 positions are modified to phosphoserine: serine 990, serine 997, and serine 1000. A Phosphotyrosine modification is found at tyrosine 1003. In terms of domain architecture, Protein kinase spans 1078–1345 (VHFNEVIGRG…RISAIFSTFI (268 aa)). ATP is bound by residues 1084–1092 (IGRGHFGCV) and lysine 1110. Aspartate 1204 serves as the catalytic Proton acceptor. Positions 1212–1390 (LDEKFTVKVA…TRPASFWETS (179 aa)) are interaction with RANBP9. Phosphotyrosine is present on tyrosine 1230. Phosphotyrosine; by autocatalysis is present on residues tyrosine 1234 and tyrosine 1235. Threonine 1289 carries the phosphothreonine modification. The interval 1320 to 1359 (WHPKAEMRPSFSELVSRISAIFSTFIGEHYVHVNATYVNV) is interaction with MUC20. 2 positions are modified to phosphotyrosine; by autocatalysis: tyrosine 1349 and tyrosine 1356. Tyrosine 1365 carries the post-translational modification Phosphotyrosine.

It belongs to the protein kinase superfamily. Tyr protein kinase family. Heterodimer made of an alpha chain (50 kDa) and a beta chain (145 kDa) which are disulfide linked. Binds PLXNB1. Interacts when phosphorylated with downstream effectors including STAT3, PIK3R1, SRC, PCLG1, GRB2 and GAB1. Interacts with SPSB1, SPSB2 and SPSB4. Interacts with INPP5D/SHIP1. When phosphorylated at Tyr-1356, interacts with INPPL1/SHIP2. Interacts with RANBP9 and RANBP10, as well as SPSB1, SPSB2, SPSB3 and SPSB4. SPSB1 binding occurs in the presence and in the absence of HGF, however HGF treatment has a positive effect on this interaction. Interacts with MUC20; prevents interaction with GRB2 and suppresses hepatocyte growth factor-induced cell proliferation. Interacts with GRB10. Interacts with PTPN1 and PTPN2. Interacts with HSP90AA1 and HSP90AB1; the interaction suppresses MET kinase activity. Interacts with tensin TNS3. Interacts (when phosphorylated) with tensin TNS4 (via SH2 domain); the interaction increases MET protein stability by inhibiting MET endocytosis and subsequent lysosomal degradation. Autophosphorylated in response to ligand binding on Tyr-1234 and Tyr-1235 in the kinase domain leading to further phosphorylation of Tyr-1349 and Tyr-1356 in the C-terminal multifunctional docking site. Dephosphorylated by PTPRJ at Tyr-1349 and Tyr-1365. Dephosphorylated by PTPN1 and PTPN2. Post-translationally, ubiquitinated. Ubiquitination by CBL regulates the receptor stability and activity through proteasomal degradation. In terms of processing, O-mannosylation of IPT/TIG domains by TMEM260 is required for protein maturation. O-mannosylated residues are composed of single mannose glycans that are not elongated or modified.

It localises to the membrane. It carries out the reaction L-tyrosyl-[protein] + ATP = O-phospho-L-tyrosyl-[protein] + ADP + H(+). Its activity is regulated as follows. In its inactive state, the C-terminal tail interacts with the catalytic domain and inhibits the kinase activity. Upon ligand binding, the C-terminal tail is displaced and becomes phosphorylated, thus increasing the kinase activity. Receptor tyrosine kinase that transduces signals from the extracellular matrix into the cytoplasm by binding to hepatocyte growth factor/HGF ligand. Regulates many physiological processes including proliferation, scattering, morphogenesis and survival. Ligand binding at the cell surface induces autophosphorylation of MET on its intracellular domain that provides docking sites for downstream signaling molecules. Following activation by ligand, interacts with the PI3-kinase subunit PIK3R1, PLCG1, SRC, GRB2, STAT3 or the adapter GAB1. Recruitment of these downstream effectors by MET leads to the activation of several signaling cascades including the RAS-ERK, PI3 kinase-AKT, or PLCgamma-PKC. The RAS-ERK activation is associated with the morphogenetic effects while PI3K/AKT coordinates prosurvival effects. During embryonic development, MET signaling plays a role in gastrulation, development and migration of muscles and neuronal precursors, angiogenesis and kidney formation. In adults, participates in wound healing as well as organ regeneration and tissue remodeling. Also promotes differentiation and proliferation of hematopoietic cells. The sequence is that of Hepatocyte growth factor receptor (MET) from Pongo abelii (Sumatran orangutan).